We begin with the raw amino-acid sequence, 361 residues long: WAT1-related protein At4g01450 (361 aa).

Transmembrane regions (helical) follow at residues 8–28 (WAPM…NALV), 40–60 (VIAT…AYFW), 76–96 (LFVS…LGLS), 103–123 (GSAF…IFGF), 132–152 (IGYG…LLTM), 177–197 (WIKG…WMLI), 209–229 (YSST…LSLI), 243–263 (LTII…TVGM), 273–293 (VVSS…DFLI), and 298–318 (IYLG…IFLW). EamA domains lie at 21-142 (AGMV…GTLI) and 194-317 (WMLI…YIFL).

This sequence belongs to the drug/metabolite transporter (DMT) superfamily. Plant drug/metabolite exporter (P-DME) (TC 2.A.7.4) family.

It localises to the membrane. The protein is WAT1-related protein At4g01450 of Arabidopsis thaliana (Mouse-ear cress).